A 371-amino-acid polypeptide reads, in one-letter code: Chaperone protein DnaJ (371 aa).

The J domain occupies 5 to 70 (CYYEILNISK…SKRSRYDQFG (66 aa)). The segment at 127–204 (GVEKEITIPR…CYGNGKVKKQ (78 aa)) adopts a CR-type zinc-finger fold. Positions 140, 143, 156, 159, 178, 181, 192, and 195 each coordinate Zn(2+). CXXCXGXG motif repeat units lie at residues 140–147 (CDSCDGTG), 156–163 (CHACHGQG), 178–185 (CPVCNGTG), and 192–199 (CDACYGNG).

This sequence belongs to the DnaJ family. Homodimer. Zn(2+) is required as a cofactor.

The protein localises to the cytoplasm. Functionally, participates actively in the response to hyperosmotic and heat shock by preventing the aggregation of stress-denatured proteins and by disaggregating proteins, also in an autonomous, DnaK-independent fashion. Unfolded proteins bind initially to DnaJ; upon interaction with the DnaJ-bound protein, DnaK hydrolyzes its bound ATP, resulting in the formation of a stable complex. GrpE releases ADP from DnaK; ATP binding to DnaK triggers the release of the substrate protein, thus completing the reaction cycle. Several rounds of ATP-dependent interactions between DnaJ, DnaK and GrpE are required for fully efficient folding. Also involved, together with DnaK and GrpE, in the DNA replication of plasmids through activation of initiation proteins. The chain is Chaperone protein DnaJ from Francisella tularensis subsp. holarctica (strain LVS).